A 417-amino-acid chain; its full sequence is uncharacterized protein (417 aa).

4 helical membrane-spanning segments follow: residues 87–107 (LVVAAACTIVEALNLNLGYWI), 130–150 (IAGTVLGVIVGSLVPYFTPSV), 177–197 (FFITIQALTSLSLAGLDVYAA), and 202–222 (IIDTIIGASLAWAAVSYLWPD). Low complexity predominate over residues 366-398 (APSAPAAAEHKATSSSNSSNSSPGSSNPTTAPT). Residues 366-417 (APSAPAAAEHKATSSSNSSNSSPGSSNPTTAPTDKFRTGSPKTQPEKISAFW) are disordered.

This sequence belongs to the YccS/YhfK family.

Its subcellular location is the cell membrane. This is an uncharacterized protein from Neisseria gonorrhoeae.